A 637-amino-acid chain; its full sequence is Transcription factor GLABRA 3 (637 aa).

The bHLH domain occupies D437–L486. Residues R497–R521 are disordered. The segment at N541 to C637 is binding with MYB0/GL1 and MYB23.

As to quaternary structure, efficient DNA binding requires dimerization with another bHLH protein. Homodimer and heterodimer with BHLH2. Interacts directly with TTG1 and MYB0/GL1 to form a complex. Its interaction with TRY prevents MYB0/GL1 binding. Interacts with MYB75/PAP1, MYB90/PAP2, TT2, CPC, MYB23 and MYB66/WER. Interacts with MYB82. As to expression, mostly expressed in roots and flowers. Also present in stems and leaves, and, to a lower extent, in hypocotyls. Expressed in epidermal root hair cells (trichoblasts) and moves to root hairless cells (atrichoblasts) by a cell-to-cell movement through plasmodesmata (at protein level).

The protein resides in the nucleus. In terms of biological role, transcription activator, when associated with MYB75/PAP1, MYB90/PAP2 or TT2. Involved in epidermal cell fate specification. Negatively regulates stomata formation, but, in association with TTG1 and MYB0/GL1, promotes trichome formation, branching and endoreplication. Also regulates trichome cell wall maturation. Together with MYB66/WER, promotes the formation of non-hair cells in root epidermis cells in the N position. Whereas together with CPC, promotes the formation of hair cells in root epidermis cells in the H position by inhibiting non-hair cell formation. Also seems to play a role in the activation of anthocyanin biosynthesis, probably together with MYB75/PAP1. Activates the transcription of GL2. The polypeptide is Transcription factor GLABRA 3 (GL3) (Arabidopsis thaliana (Mouse-ear cress)).